The primary structure comprises 199 residues: UPF0301 protein Vapar_4617 (199 aa).

It belongs to the UPF0301 (AlgH) family.

In Variovorax paradoxus (strain S110), this protein is UPF0301 protein Vapar_4617.